The following is a 325-amino-acid chain: Pyruvate dehydrogenase E1 component subunit beta (325 aa).

Glu-59 is a binding site for thiamine diphosphate.

In terms of assembly, heterodimer of an alpha and a beta chain. Thiamine diphosphate serves as cofactor.

The catalysed reaction is N(6)-[(R)-lipoyl]-L-lysyl-[protein] + pyruvate + H(+) = N(6)-[(R)-S(8)-acetyldihydrolipoyl]-L-lysyl-[protein] + CO2. Its function is as follows. The pyruvate dehydrogenase complex catalyzes the overall conversion of pyruvate to acetyl-CoA and CO(2). It contains multiple copies of three enzymatic components: pyruvate dehydrogenase (E1), dihydrolipoamide acetyltransferase (E2) and lipoamide dehydrogenase (E3). This is Pyruvate dehydrogenase E1 component subunit beta (pdhB) from Rickettsia bellii (strain RML369-C).